Here is a 400-residue protein sequence, read N- to C-terminus: NADH-quinone oxidoreductase subunit D (400 aa).

Belongs to the complex I 49 kDa subunit family. NDH-1 is composed of 14 different subunits. Subunits NuoB, C, D, E, F, and G constitute the peripheral sector of the complex.

The protein resides in the cell inner membrane. It catalyses the reaction a quinone + NADH + 5 H(+)(in) = a quinol + NAD(+) + 4 H(+)(out). In terms of biological role, NDH-1 shuttles electrons from NADH, via FMN and iron-sulfur (Fe-S) centers, to quinones in the respiratory chain. The immediate electron acceptor for the enzyme in this species is believed to be a menaquinone. Couples the redox reaction to proton translocation (for every two electrons transferred, four hydrogen ions are translocated across the cytoplasmic membrane), and thus conserves the redox energy in a proton gradient. This Chlorobium phaeobacteroides (strain DSM 266 / SMG 266 / 2430) protein is NADH-quinone oxidoreductase subunit D.